A 131-amino-acid chain; its full sequence is D-ribose pyranase (131 aa).

His-20 functions as the Proton donor in the catalytic mechanism. Substrate is bound by residues Asp-28, His-98, and 120–122 (YAN).

Belongs to the RbsD / FucU family. RbsD subfamily. Homodecamer.

It is found in the cytoplasm. It catalyses the reaction beta-D-ribopyranose = beta-D-ribofuranose. It participates in carbohydrate metabolism; D-ribose degradation; D-ribose 5-phosphate from beta-D-ribopyranose: step 1/2. Its function is as follows. Catalyzes the interconversion of beta-pyran and beta-furan forms of D-ribose. This chain is D-ribose pyranase, found in Clostridium perfringens (strain SM101 / Type A).